We begin with the raw amino-acid sequence, 333 residues long: HTH-type transcriptional repressor PurR (333 aa).

One can recognise an HTH lacI-type domain in the interval 2 to 56; it reads ATIKDVAKMAGVSTTTVSHVINKTRFVAKETEQQVLQAIKNLNYSPSAVARSLKV. The H-T-H motif DNA-binding region spans 4–23; the sequence is IKDVAKMAGVSTTTVSHVIN. The DNA-binding element occupies 48–56; it reads SAVARSLKV. 5 residues coordinate hypoxanthine: Tyr-73, Lys-189, Thr-191, Phe-220, and Asp-274.

Homodimer.

It functions in the pathway purine metabolism; purine nucleotide biosynthesis [regulation]. Functionally, is the main repressor of the genes involved in the de novo synthesis of purine nucleotides, regulating purB, purC, purEK, purF, purHD, purL, purMN and guaBA expression. PurR is allosterically activated to bind its cognate DNA by binding the purine corepressors, hypoxanthine or guanine, thereby effecting transcription repression. This Histophilus somni (strain 129Pt) (Haemophilus somnus) protein is HTH-type transcriptional repressor PurR.